The sequence spans 247 residues: GTP cyclohydrolase 1 type 2 homolog (247 aa).

His-63, His-64, Asp-101, His-215, and Glu-219 together coordinate a divalent metal cation.

It belongs to the GTP cyclohydrolase I type 2/NIF3 family. As to quaternary structure, homohexamer.

The polypeptide is GTP cyclohydrolase 1 type 2 homolog (Buchnera aphidicola subsp. Acyrthosiphon pisum (strain APS) (Acyrthosiphon pisum symbiotic bacterium)).